A 742-amino-acid polypeptide reads, in one-letter code: Phosphoribosylformylglycinamidine synthase subunit PurL (742 aa).

His54 is an active-site residue. The ATP site is built by Tyr57 and Lys96. Glu98 contacts Mg(2+). Residues 99–102 (SHNH) and Arg121 contribute to the substrate site. His100 acts as the Proton acceptor in catalysis. Asp122 serves as a coordination point for Mg(2+). Substrate is bound at residue Gln245. A Mg(2+)-binding site is contributed by Asp273. Substrate is bound at residue 317–319 (ESQ). Asp500 and Gly537 together coordinate ATP. Asn538 provides a ligand contact to Mg(2+). Ser540 lines the substrate pocket.

This sequence belongs to the FGAMS family. Monomer. Part of the FGAM synthase complex composed of 1 PurL, 1 PurQ and 2 PurS subunits.

Its subcellular location is the cytoplasm. It carries out the reaction N(2)-formyl-N(1)-(5-phospho-beta-D-ribosyl)glycinamide + L-glutamine + ATP + H2O = 2-formamido-N(1)-(5-O-phospho-beta-D-ribosyl)acetamidine + L-glutamate + ADP + phosphate + H(+). It participates in purine metabolism; IMP biosynthesis via de novo pathway; 5-amino-1-(5-phospho-D-ribosyl)imidazole from N(2)-formyl-N(1)-(5-phospho-D-ribosyl)glycinamide: step 1/2. Its function is as follows. Part of the phosphoribosylformylglycinamidine synthase complex involved in the purines biosynthetic pathway. Catalyzes the ATP-dependent conversion of formylglycinamide ribonucleotide (FGAR) and glutamine to yield formylglycinamidine ribonucleotide (FGAM) and glutamate. The FGAM synthase complex is composed of three subunits. PurQ produces an ammonia molecule by converting glutamine to glutamate. PurL transfers the ammonia molecule to FGAR to form FGAM in an ATP-dependent manner. PurS interacts with PurQ and PurL and is thought to assist in the transfer of the ammonia molecule from PurQ to PurL. This chain is Phosphoribosylformylglycinamidine synthase subunit PurL, found in Bacillus velezensis (strain DSM 23117 / BGSC 10A6 / LMG 26770 / FZB42) (Bacillus amyloliquefaciens subsp. plantarum).